A 366-amino-acid polypeptide reads, in one-letter code: Inhibin alpha chain (366 aa).

Residues methionine 1–serine 20 form the signal peptide. Residues cysteine 21–arginine 63 constitute a propeptide that is removed on maturation. A propeptide spans histidine 64 to arginine 233 (inhibin alpha N-terminal region). Asparagine 147 and asparagine 269 each carry an N-linked (GlcNAc...) asparagine glycan. Cystine bridges form between cysteine 263–cysteine 328, cysteine 292–cysteine 363, and cysteine 296–cysteine 365.

The protein belongs to the TGF-beta family. As to quaternary structure, dimeric, linked by one or more disulfide bonds. Activin B is a dimer of alpha and beta-B. Inhibin A is a dimer of alpha and beta-A. Inhibin B is a dimer of alpha and beta-B. Interacts with TGFBR3L; this interaction regulates female fertility. In terms of processing, proteolytic processing yields a number of bioactive forms, consisting either solely of the mature alpha chain, of the most N-terminal propeptide linked through a disulfide bond to the mature alpha chain, or of the entire proprotein. As to expression, mainly expressed in ovary and testis. Alpha- and beta-B-subunits are the predominant forms found in testis. Also found in placenta, pituitary, adrenal gland, bone marrow, kidney, spinal cord and brain.

It is found in the secreted. Inhibins and activins inhibit and activate, respectively, the secretion of follitropin by the pituitary gland. Inhibins/activins are involved in regulating a number of diverse functions such as hypothalamic and pituitary hormone secretion, gonadal hormone secretion, germ cell development and maturation, erythroid differentiation, insulin secretion, nerve cell survival, embryonic axial development or bone growth, depending on their subunit composition. Inhibins appear to oppose the functions of activins. Functionally, inhibin A is a dimer of alpha/INHA and beta-A/INHBA that functions as a feedback regulator in the hypothalamic-pituitary-gonadal (HPG) axis. Inhibits the secretion of FSH from the anterior pituitary gland by acting on pituitary gonadotrope cells. Antagonizes activin A by binding to the proteoglycan, betaglycan, and forming a stable complex with and, thereby, sequestering type II activin receptors while excluding type I receptor. In terms of biological role, inhibin B is a dimer of alpha and beta-B that plays a crucial role in the regulation of the reproductive system by inhibiting the secretion of follicle-stimulating hormone (FSH) from the anterior pituitary gland. Thereby, maintains reproductive homeostasis in both males and females. Acts as a more potent suppressor of FSH release than inhibin A. Functions as competitive receptor antagonist binding activin type II receptors with high affinity in the presence of the TGF-beta type III coreceptor/TGFBR3L. The sequence is that of Inhibin alpha chain (Inha) from Rattus norvegicus (Rat).